The chain runs to 185 residues: Elongation factor P (185 aa).

It belongs to the elongation factor P family.

It localises to the cytoplasm. It functions in the pathway protein biosynthesis; polypeptide chain elongation. In terms of biological role, involved in peptide bond synthesis. Stimulates efficient translation and peptide-bond synthesis on native or reconstituted 70S ribosomes in vitro. Probably functions indirectly by altering the affinity of the ribosome for aminoacyl-tRNA, thus increasing their reactivity as acceptors for peptidyl transferase. This Kosmotoga olearia (strain ATCC BAA-1733 / DSM 21960 / TBF 19.5.1) protein is Elongation factor P.